Consider the following 1060-residue polypeptide: Probable serine/threonine-protein kinase MARK-A (1060 aa).

Composition is skewed to basic and acidic residues over residues 1 to 11 (METLKEEEQFR) and 23 to 37 (HLKEETQIQQKEREQ). Disordered stretches follow at residues 1–52 (METL…LQLQ) and 67–88 (NKIPSSNNSSNSSSPNPLSISV). Composition is skewed to low complexity over residues 38 to 52 (QQQQQQQLQQQLQLQ) and 68 to 88 (KIPSSNNSSNSSSPNPLSISV). The region spanning 109–361 (YLVIKTIGRG…MEEIINHPWL (253 aa)) is the Protein kinase domain. Residues 115–123 (IGRGQFGKV) and K139 contribute to the ATP site. The Proton acceptor role is filled by D232. A compositionally biased stretch (low complexity) spans 409–475 (INNINNTMAT…TTTTNATTTT (67 aa)). Disordered stretches follow at residues 409 to 488 (INNI…NNEE), 560 to 701 (GENS…SPLC), 714 to 886 (LREK…PVHS), and 899 to 966 (DDKS…QEPR). The 41-residue stretch at 488 to 528 (ELDQEIIEELVGLGFEREELCNSIRQNKYNDAASTYFLLQG) folds into the UBA domain. Residues 577–594 (TVDSPKSTNTPQYRSSNT) are compositionally biased toward polar residues. Composition is skewed to low complexity over residues 603–613 (QQQQQQQQQQQ), 620–637 (QQQNQQQSQQQYNNNNHN), 650–699 (STTV…NPSP), and 720–760 (TTTN…TSPN). Polar residues predominate over residues 761 to 770 (LQPFSLASTA). Composition is skewed to low complexity over residues 771 to 799 (NNNNNNNNSNNNSNNNNNNNNNNNNSLNS) and 811 to 831 (QQQQQMQQASNTRRLRSNSSS). Positions 837 to 846 (QRQESRKLED) are enriched in basic and acidic residues. Low complexity-rich tracts occupy residues 904–926 (NSSSSNNNTNNNNTTTSVSTNNT) and 935–965 (QNSNNNNQQATSSSPNVTSPSSPSQQQQQEP). The KA1 domain maps to 1008–1057 (IECETEGVRFSIEICRLPRLSVNGLKFKRIGGSSWRYKSICKDLLSQMKL).

Belongs to the protein kinase superfamily. CAMK Ser/Thr protein kinase family. SNF1 subfamily.

The catalysed reaction is L-seryl-[protein] + ATP = O-phospho-L-seryl-[protein] + ADP + H(+). The enzyme catalyses L-threonyl-[protein] + ATP = O-phospho-L-threonyl-[protein] + ADP + H(+). The chain is Probable serine/threonine-protein kinase MARK-A (mrkA) from Dictyostelium discoideum (Social amoeba).